A 169-amino-acid chain; its full sequence is Putative prolyl-tRNA synthetase associated domain-containing protein 1 (169 aa).

This sequence belongs to the PRORSD1 family.

This chain is Putative prolyl-tRNA synthetase associated domain-containing protein 1 (PRORSD1P), found in Homo sapiens (Human).